The sequence spans 669 residues: Epithelial sodium channel subunit gamma (669 aa).

Topologically, residues Met1 to Phe67 are cytoplasmic. Residues Ile68–Ile88 traverse the membrane as a helical segment. Residues Met89–Gln551 are Extracellular-facing. 8 cysteine pairs are disulfide-bonded: Cys113/Cys300, Cys223/Cys231, Cys277/Cys284, Cys389/Cys474, Cys411/Cys470, Cys415/Cys466, Cys424/Cys451, and Cys426/Cys440. Residues Leu552–Ile572 traverse the membrane as a helical segment. Over Asp573–His669 the chain is Cytoplasmic. The tract at residues Asp592–Asp619 is disordered.

It belongs to the amiloride-sensitive sodium channel (TC 1.A.6) family. SCNN1G subfamily. Component of the heterotrimeric epithelial sodium channel (ENaC) composed of an alpha/SCNN1A, a beta/SCNN1B and a gamma/SCNN1G subunit.

Its subcellular location is the apical cell membrane. The enzyme catalyses Na(+)(in) = Na(+)(out). With respect to regulation, originally identified and characterized by its inhibition by the diuretic drug amiloride. Its function is as follows. This is one of the three pore-forming subunits of the heterotrimeric epithelial sodium channel (ENaC), a critical regulator of sodium balance and fluid homeostasis. ENaC operates in epithelial tissues, where it mediates the electrodiffusion of sodium ions from extracellular fluid through the apical membrane of cells, with water following osmotically. The protein is Epithelial sodium channel subunit gamma of Pelodiscus sinensis (Chinese softshell turtle).